The primary structure comprises 136 residues: Large ribosomal subunit protein bL19 (136 aa).

The protein belongs to the bacterial ribosomal protein bL19 family.

Functionally, this protein is located at the 30S-50S ribosomal subunit interface and may play a role in the structure and function of the aminoacyl-tRNA binding site. The sequence is that of Large ribosomal subunit protein bL19 from Xylella fastidiosa (strain M23).